A 212-amino-acid polypeptide reads, in one-letter code: Pyridoxine/pyridoxamine 5'-phosphate oxidase (212 aa).

Substrate is bound by residues Arg8–Tyr11 and Lys66. Residues Arg61–Lys66, Phe76–Thr77, Arg82, Lys83, and Gln105 contribute to the FMN site. Tyr123, Arg127, and Ser131 together coordinate substrate. FMN is bound by residues Gln140 to Ser141 and Trp185. Position 191-193 (Arg191–His193) interacts with substrate. Residue Arg195 participates in FMN binding.

It belongs to the pyridoxamine 5'-phosphate oxidase family. As to quaternary structure, homodimer. FMN is required as a cofactor.

The enzyme catalyses pyridoxamine 5'-phosphate + O2 + H2O = pyridoxal 5'-phosphate + H2O2 + NH4(+). The catalysed reaction is pyridoxine 5'-phosphate + O2 = pyridoxal 5'-phosphate + H2O2. Its pathway is cofactor metabolism; pyridoxal 5'-phosphate salvage; pyridoxal 5'-phosphate from pyridoxamine 5'-phosphate: step 1/1. The protein operates within cofactor metabolism; pyridoxal 5'-phosphate salvage; pyridoxal 5'-phosphate from pyridoxine 5'-phosphate: step 1/1. Functionally, catalyzes the oxidation of either pyridoxine 5'-phosphate (PNP) or pyridoxamine 5'-phosphate (PMP) into pyridoxal 5'-phosphate (PLP). This Shewanella denitrificans (strain OS217 / ATCC BAA-1090 / DSM 15013) protein is Pyridoxine/pyridoxamine 5'-phosphate oxidase.